We begin with the raw amino-acid sequence, 152 residues long: Large ribosomal subunit protein uL22 (152 aa).

It belongs to the universal ribosomal protein uL22 family. In terms of assembly, part of the 50S ribosomal subunit.

In terms of biological role, this protein binds specifically to 23S rRNA. It makes multiple contacts with different domains of the 23S rRNA in the assembled 50S subunit and ribosome. The globular domain of the protein is located near the polypeptide exit tunnel on the outside of the subunit, while an extended beta-hairpin is found that lines the wall of the exit tunnel in the center of the 70S ribosome. In Cenarchaeum symbiosum (strain A), this protein is Large ribosomal subunit protein uL22.